The following is a 139-amino-acid chain: uncharacterized protein (139 aa).

The tract at residues 1 to 26 (MQLVREKRGAHQHVPRKTTEPQKVRG) is disordered. Over residues 17-26 (KTTEPQKVRG) the composition is skewed to basic and acidic residues.

This is an uncharacterized protein from Ictalurid herpesvirus 1 (strain Auburn) (IcHV-1).